A 245-amino-acid polypeptide reads, in one-letter code: Hydrolase pyvD (245 aa).

Residues Cys-133, Asp-179, and His-211 contribute to the active site.

Belongs to the dienelactone hydrolase family.

The protein operates within secondary metabolite biosynthesis. Hydrolase; part of the gene cluster that mediates the biosynthesis of pyranoviolin A, a pyranonigrin analog with a C-3 methoxy group. Initially, the PKS portion of pyvA synthesizes C-10 carbon chain from 5 molecules of malonyl-CoA, which is then condensed with the thiolation (T) domain-bound glycine activated by the adenylation (A) domain. The subsequent chain release by Dieckmann condensation (DKC) could be catalyzed by the TE domain present at the C-terminus of pyvA and/or the alpha/beta hydrolase pyvD, installing the tetramic acid moiety. The FAD-dependent monooxygenase pyvC next epoxidizes one of the olefins of the polyketide part, and the epoxide ring-opening induces the dihydro-gamma-pyrone ring formation. The cytochrome P450 monooxygeanse pyvB would be responsible for the 2 consecutive reactions, in which the dihydro-gamma-pyrone is oxidized to gamma-pyrone and C-7 is hydroxylated to yield pyranonigrin F. Finally, the O-methyltransferase pyvH methylates the C-3 hydroxy group to complete the biosynthesis. This chain is Hydrolase pyvD, found in Aspergillus violaceofuscus (strain CBS 115571).